A 21-amino-acid chain; its full sequence is Putative sperm adenylate cyclase (21 aa).

The catalysed reaction is ATP = 3',5'-cyclic AMP + diphosphate. The sequence is that of Putative sperm adenylate cyclase from Mus musculus (Mouse).